The chain runs to 680 residues: MANSAQTDTVSAGNLFSYDSVALSDPSTHIRLLDLHPASCYTDDLYCCIYTAPISPPPSYIALSYVWGDSTRTHEISVANEVNDGRAFIPLRLTSSLDTCLRHLRELHYRRQLEPLPLWIDQICINQDDNEEKSFQVRLMRDIYSSAHQVVVWLGPAVDDSNRVMDALAEVGQEFLDKIGDHTEEEHWLSVDRLIKEKIEQPDAVTFLREAYKVIYMLNREHSFTRWVERTWFKRLWTIQEFCLCADTIFACGYKVVSQKMVSALTDFMRCIIMDKCLRGLLETPDTPTYSTLFSGLMRLFPLFQHRGYCQYPYRKETLEHLLVELFVGVTPPCVTNKRDKVYGLLGLAGDADELGIRPDYTTSTTLAQVFTQTARAIIQKNWKIQRKRGLQILRYGSLGQRKSAPKNETDLPSWVPEWNGRIAKTYQREMSFLACGEIRMPDLVPTTSPTILGLRGFCVGTIVDLGEQARVDIWRRSADGAKKIVGFFDNFRRLLNLSKQNKRAKDIYASTAHHDAALWRVPIGDQHIIFGVGRQIAKRTDSKEDSAFQNFIAYYEDYVRRDDDWKDYMAAYQAGEEQAKLKMGKHMDRVFSEGYYMGLRHMEGKRPYLTENGYLGMGPGLLQPGDKVVVFHGDDIPYVVRPVPGKGDNTYLLMGEAYCDGIMDGELADTAEREDFYLV.

Its function is as follows. Involved in the non-self-recognition during asexual growth of N.crassa. This process involves restriction of heterokaryon formation via genetic differences at 11 het loci, including mating type. This is Heterokaryon incompatibility protein 6, OR allele (het-6) from Neurospora crassa (strain ATCC 24698 / 74-OR23-1A / CBS 708.71 / DSM 1257 / FGSC 987).